The following is a 267-amino-acid chain: Syntaxin-72 (267 aa).

Residues 1 to 244 (MPVIDIIFRV…QLVQMRSSRN (244 aa)) lie on the Cytoplasmic side of the membrane. Positions 53–87 (KAELASTEKNRAAAVAMNAEVRRTKARLAEDVVKL) form a coiled coil. A t-SNARE coiled-coil homology domain is found at 173–235 (EMRRKKQDEG…KNTNVRLKKQ (63 aa)). Residues 245-265 (FCIDIILLCVILGIVSYIYNA) traverse the membrane as a helical; Anchor for type IV membrane protein segment. At 266–267 (LN) the chain is on the vesicular side.

Belongs to the syntaxin family. Part of the t-SNARE complex. In terms of tissue distribution, expressed in root, leaf, stem, flower and silique.

The protein resides in the membrane. In terms of biological role, vesicle trafficking protein that functions in the secretory pathway. In Arabidopsis thaliana (Mouse-ear cress), this protein is Syntaxin-72 (SYP72).